Reading from the N-terminus, the 218-residue chain is TPA-induced transmembrane protein homolog (218 aa).

The interval 1–54 (MEEGSRSQSPREELELSMLDGPQEELTPLNNDLRIQPNSAEDPSPAQVGKESPW) is disordered. The helical transmembrane segment at 66 to 86 (KLWMVIVTIFLCFIIVIVISL) threads the bilayer.

Its subcellular location is the endoplasmic reticulum membrane. In Mus musculus (Mouse), this protein is TPA-induced transmembrane protein homolog.